Reading from the N-terminus, the 481-residue chain is Glutamate--tRNA ligase 1 (481 aa).

A 'HIGH' region motif is present at residues 11–21 (PSPTGSLHIGG). The short motif at 244-248 (KLSKR) is the 'KMSKS' region element. Lys247 contributes to the ATP binding site.

This sequence belongs to the class-I aminoacyl-tRNA synthetase family. Glutamate--tRNA ligase type 1 subfamily. Monomer.

The protein localises to the cytoplasm. It carries out the reaction tRNA(Glu) + L-glutamate + ATP = L-glutamyl-tRNA(Glu) + AMP + diphosphate. Functionally, catalyzes the attachment of glutamate to tRNA(Glu) in a two-step reaction: glutamate is first activated by ATP to form Glu-AMP and then transferred to the acceptor end of tRNA(Glu). This is Glutamate--tRNA ligase 1 from Caldanaerobacter subterraneus subsp. tengcongensis (strain DSM 15242 / JCM 11007 / NBRC 100824 / MB4) (Thermoanaerobacter tengcongensis).